A 417-amino-acid chain; its full sequence is Hydroxysqualene dehydroxylase (417 aa).

Belongs to the HpnE family.

It catalyses the reaction squalene + FAD + H2O + H(+) = hydroxysqualene + FADH2. Its pathway is secondary metabolite biosynthesis; hopanoid biosynthesis. Functionally, involved in the biosynthesis of the hopanoid precursor squalene (SQ) from farnesyl diphosphate (FPP). Catalyzes the third (last) step, the reduction of hydroxysqualene (HSQ) to SQ. The protein is Hydroxysqualene dehydroxylase of Sinorhizobium fredii (strain NBRC 101917 / NGR234).